We begin with the raw amino-acid sequence, 144 residues long: Large ribosomal subunit protein uL16 (144 aa).

It belongs to the universal ribosomal protein uL16 family. Part of the 50S ribosomal subunit.

Functionally, binds 23S rRNA and is also seen to make contacts with the A and possibly P site tRNAs. This chain is Large ribosomal subunit protein uL16, found in Thermoanaerobacter pseudethanolicus (strain ATCC 33223 / 39E) (Clostridium thermohydrosulfuricum).